Here is a 56-residue protein sequence, read N- to C-terminus: Arcadin-3 (56 aa).

Its subcellular location is the cytoplasm. The protein resides in the cytoskeleton. Functionally, part of an actin-like archaeal cytoskeleton. The polypeptide is Arcadin-3 (Pyrobaculum calidifontis (strain DSM 21063 / JCM 11548 / VA1)).